The following is a 340-amino-acid chain: Cytosolic Fe-S cluster assembly factor NBP35 (340 aa).

[4Fe-4S] cluster-binding residues include cysteine 31, cysteine 45, cysteine 48, and cysteine 54. Residue glycine 84–serine 91 participates in ATP binding. 2 residues coordinate [4Fe-4S] cluster: cysteine 257 and cysteine 260.

It belongs to the Mrp/NBP35 ATP-binding proteins family. NUBP1/NBP35 subfamily. Heterotetramer of 2 NBP35 and 2 CFD1 chains. The cofactor is [4Fe-4S] cluster.

The protein resides in the cytoplasm. In terms of biological role, component of the cytosolic iron-sulfur (Fe/S) protein assembly (CIA) machinery. Required for maturation of extramitochondrial Fe-S proteins. The NBP35-CFD1 heterotetramer forms a Fe-S scaffold complex, mediating the de novo assembly of an Fe-S cluster and its transfer to target apoproteins. This chain is Cytosolic Fe-S cluster assembly factor NBP35, found in Phaeosphaeria nodorum (strain SN15 / ATCC MYA-4574 / FGSC 10173) (Glume blotch fungus).